Consider the following 87-residue polypeptide: Acyl-CoA-binding protein (87 aa).

Ser2 carries the N-acetylserine modification. The 86-residue stretch at 2–87 (SQAEFDKAAE…VEDLKKKYGI (86 aa)) folds into the ACB domain. An N6-acetyllysine; alternate modification is found at Lys8. Lys8 is subject to N6-succinyllysine; alternate. Lys14 lines the an acyl-CoA pocket. Lys17 bears the N6-succinyllysine mark. An N6-acetyllysine modification is found at Lys19. Tyr29 carries the phosphotyrosine modification. Residues 29–33 (YSHYK), Lys55, and Tyr74 each bind an acyl-CoA. N6-acetyllysine; alternate is present on Lys55. Lys55 is modified (N6-succinyllysine; alternate). Lys55 is modified (N6-(2-hydroxyisobutyryl)lysine; alternate). At Lys55 the chain carries N6-malonyllysine; alternate. Lys77 bears the N6-acetyllysine; alternate mark. The residue at position 77 (Lys77) is an N6-succinyllysine; alternate.

It belongs to the ACBP family. Monomer.

Its subcellular location is the endoplasmic reticulum. The protein resides in the golgi apparatus. Its function is as follows. Binds medium- and long-chain acyl-CoA esters with very high affinity and may function as an intracellular carrier of acyl-CoA esters. The protein is Acyl-CoA-binding protein (DBI) of Canis lupus familiaris (Dog).